The sequence spans 465 residues: UDP-N-acetylmuramate--L-alanine ligase (465 aa).

An ATP-binding site is contributed by Gly-112 to Thr-118.

It belongs to the MurCDEF family.

The protein localises to the cytoplasm. The enzyme catalyses UDP-N-acetyl-alpha-D-muramate + L-alanine + ATP = UDP-N-acetyl-alpha-D-muramoyl-L-alanine + ADP + phosphate + H(+). It functions in the pathway cell wall biogenesis; peptidoglycan biosynthesis. Cell wall formation. The sequence is that of UDP-N-acetylmuramate--L-alanine ligase from Janthinobacterium sp. (strain Marseille) (Minibacterium massiliensis).